The chain runs to 173 residues: Photosystem I reaction center subunit XI (173 aa).

2 helical membrane-spanning segments follow: residues 92–112 (LAGLLAAIGLVVLLTGALSLY) and 148–168 (LIGGIGGAVVAYFLTSNLGII).

This sequence belongs to the PsaL family.

It localises to the cellular thylakoid membrane. The chain is Photosystem I reaction center subunit XI from Nostoc punctiforme (strain ATCC 29133 / PCC 73102).